Reading from the N-terminus, the 815-residue chain is Leucine--tRNA ligase (815 aa).

The 'HIGH' region signature appears at 41-51; sequence PYPSGTLHVGH. Residues 576-580 carry the 'KMSKS' region motif; the sequence is KMSKS. An ATP-binding site is contributed by lysine 579.

The protein belongs to the class-I aminoacyl-tRNA synthetase family.

The protein resides in the cytoplasm. The enzyme catalyses tRNA(Leu) + L-leucine + ATP = L-leucyl-tRNA(Leu) + AMP + diphosphate. This chain is Leucine--tRNA ligase, found in Pseudothermotoga lettingae (strain ATCC BAA-301 / DSM 14385 / NBRC 107922 / TMO) (Thermotoga lettingae).